We begin with the raw amino-acid sequence, 399 residues long: Glucosamine kinase (399 aa).

ATP contacts are provided by residues Lys-98, 149 to 151 (EYL), and Asp-156. Asp-262 provides a ligand contact to D-glucosamine. Mg(2+) contacts are provided by Gln-267, Asp-279, and Asp-281. The Substrate specificity determinant motif signature appears at 366 to 381 (QVLREIIYAARHLPRW). Position 370 (Glu-370) interacts with D-glucosamine.

Belongs to the actinobacterial glucosamine kinase family. As to quaternary structure, monomer. Mg(2+) serves as cofactor.

It catalyses the reaction D-glucosamine + ATP = D-glucosamine 6-phosphate + ADP + H(+). Functionally, catalyzes the ATP-dependent phosphorylation of D-glucosamine (GlcN) to D-glucosamine 6-phosphate. May be involved in the phosphorylation of acquired extracellular GlcN derived from the hydrolysis of chitosan, i.e., in the incorporation of exogenous GlcN into the bacterial GlcNAc metabolism. Is unable to phosphorylate maltose. The polypeptide is Glucosamine kinase (Mycolicibacterium smegmatis (strain ATCC 700084 / mc(2)155) (Mycobacterium smegmatis)).